Consider the following 482-residue polypeptide: tRNA sulfurtransferase (482 aa).

One can recognise a THUMP domain in the interval 61–165; the sequence is EAIRDALTRI…QDRLLLIKSR (105 aa). Residues 183-184, Lys265, Gly287, and Gln296 each bind ATP; that span reads LI. A disulfide bridge connects residues Cys344 and Cys456. One can recognise a Rhodanese domain in the interval 404-482; the sequence is FVPTDVLLDI…GFSNVKVYRP (79 aa). The active-site Cysteine persulfide intermediate is the Cys456.

It belongs to the ThiI family.

The protein resides in the cytoplasm. It carries out the reaction [ThiI sulfur-carrier protein]-S-sulfanyl-L-cysteine + a uridine in tRNA + 2 reduced [2Fe-2S]-[ferredoxin] + ATP + H(+) = [ThiI sulfur-carrier protein]-L-cysteine + a 4-thiouridine in tRNA + 2 oxidized [2Fe-2S]-[ferredoxin] + AMP + diphosphate. It catalyses the reaction [ThiS sulfur-carrier protein]-C-terminal Gly-Gly-AMP + S-sulfanyl-L-cysteinyl-[cysteine desulfurase] + AH2 = [ThiS sulfur-carrier protein]-C-terminal-Gly-aminoethanethioate + L-cysteinyl-[cysteine desulfurase] + A + AMP + 2 H(+). It functions in the pathway cofactor biosynthesis; thiamine diphosphate biosynthesis. In terms of biological role, catalyzes the ATP-dependent transfer of a sulfur to tRNA to produce 4-thiouridine in position 8 of tRNAs, which functions as a near-UV photosensor. Also catalyzes the transfer of sulfur to the sulfur carrier protein ThiS, forming ThiS-thiocarboxylate. This is a step in the synthesis of thiazole, in the thiamine biosynthesis pathway. The sulfur is donated as persulfide by IscS. The sequence is that of tRNA sulfurtransferase from Pectobacterium atrosepticum (strain SCRI 1043 / ATCC BAA-672) (Erwinia carotovora subsp. atroseptica).